A 238-amino-acid chain; its full sequence is Purine nucleoside phosphorylase DeoD-type (238 aa).

Histidine 4 serves as a coordination point for a purine D-ribonucleoside. Phosphate-binding positions include glycine 20, arginine 24, arginine 43, and 87-90 (RIGS). A purine D-ribonucleoside contacts are provided by residues 181 to 183 (EME) and 205 to 206 (SD). The active-site Proton donor is the aspartate 206.

The protein belongs to the PNP/UDP phosphorylase family. In terms of assembly, homohexamer; trimer of homodimers.

The catalysed reaction is a purine D-ribonucleoside + phosphate = a purine nucleobase + alpha-D-ribose 1-phosphate. It carries out the reaction a purine 2'-deoxy-D-ribonucleoside + phosphate = a purine nucleobase + 2-deoxy-alpha-D-ribose 1-phosphate. Functionally, catalyzes the reversible phosphorolytic breakdown of the N-glycosidic bond in the beta-(deoxy)ribonucleoside molecules, with the formation of the corresponding free purine bases and pentose-1-phosphate. In Mycoplasma pneumoniae (strain ATCC 29342 / M129 / Subtype 1) (Mycoplasmoides pneumoniae), this protein is Purine nucleoside phosphorylase DeoD-type.